We begin with the raw amino-acid sequence, 192 residues long: MGQIEWAMWANEQALASGLILITGGIVATAGRFTQWYFGAYSIAAGVLICLLEYPRGKRKKGSTMERCGQKYLTSVVKLFGPLTRNYYVRAALHFLLSVPAGFLLATILGTVCLAIASVIYLLAAIRGEQWTPIEPKPKERPQVGGTIKQPPTNPPPRPPAEVRKKPSEGEEEAASAGGPQVNPMPVTDEVV.

The Cytoplasmic segment spans residues 2 to 7 (GQIEWA). Residues 8–30 (MWANEQALASGLILITGGIVATA) traverse the membrane as a helical segment. The Extracellular segment spans residues 31–35 (GRFTQ). Residues 36–53 (WYFGAYSIAAGVLICLLE) form a helical membrane-spanning segment. Over 54-69 (YPRGKRKKGSTMERCG) the chain is Cytoplasmic. Residues 70-80 (QKYLTSVVKLF) lie within the membrane without spanning it. Topologically, residues 81–86 (GPLTRN) are cytoplasmic. The chain crosses the membrane as a helical span at residues 87–104 (YYVRAALHFLLSVPAGFL). Position 105 (Leu-105) is a topological domain, extracellular. A helical transmembrane segment spans residues 106 to 126 (ATILGTVCLAIASVIYLLAAI). The Cytoplasmic portion of the chain corresponds to 127–192 (RGEQWTPIEP…NPMPVTDEVV (66 aa)). Residues 134–192 (IEPKPKERPQVGGTIKQPPTNPPPRPPAEVRKKPSEGEEEAASAGGPQVNPMPVTDEVV) are disordered. A Phosphothreonine modification is found at Thr-147. Lys-149 is covalently cross-linked (Glycyl lysine isopeptide (Lys-Gly) (interchain with G-Cter in ubiquitin)). Phosphoserine occurs at positions 168 and 176.

It belongs to the p22phox family. In terms of assembly, component of the phagocyte NADPH oxidase core complex/cytochrome b558 complex, composed of CYBB (heavy chain (beta)) and CYBA (light chain (alpha)). Component of the phagocyte NADPH oxidase complex composed of an obligatory core heterodimer formed by the membrane proteins CYBA and CYBB and the cytosolic regulatory subunits NCF1/p47-phox, NCF2/p67-phox, NCF4/p40-phox and the small GTPase RAC1 or RAC2. Interacts with NCF1 (via SH3 domain). Interacts with SH3PXD2A. Interacts with DUOX1, DUOX2 and TPO. Interacts with NOX4; this interaction mediates superoxide generation. Interacts with calprotectin (S100A8/9). Interacts with GBP7. Interacts with NOXO1. Forms a heterodimer with NOX3 and is essential for activity and cell membrane localization of NOX3. Interacts with NOX1. Ubiquitinated at Lys-149 likely by RNF145. In terms of processing, phosphorylation at Thr-147 enhances NADPH oxidase activity by promoting NCF1/p47-phox binding. As to expression, the strongest level of expression is found in kidney, peritoneal neutrophils and peritoneal macrophages, and a lower level in spleen and small intestine. Very low level of expression can be noted in brain, liver, testis, and heart.

It localises to the cell membrane. Subunit of NADPH oxidase complexes that is required for the NADPH oxidase activity that generates, in various cell types, superoxide from molecular oxygen utilizing NADPH as an electron donor. Subunit of the phagocyte NADPH oxidase complex that mediates the transfer of electrons from cytosolic NADPH to O2 to produce the superoxide anion (O2(-)). In the activated complex, electrons are first transferred from NADPH to flavin adenine dinucleotide (FAD) and subsequently transferred via two heme molecules to molecular oxygen, producing superoxide through an outer-sphere reaction. Activation of the NADPH oxidase complex is initiated by the assembly of cytosolic subunits of the NADPH oxidase complex with the core NADPH oxidase complex to form a complex at the plasma membrane or phagosomal membrane. This activation process is initiated by phosphorylation dependent binding of the cytosolic NCF1/p47-phox subunit to the C-terminus of CYBA/p22-phox. Aassociates with NOX3 to form a functional NADPH oxidase constitutively generating superoxide. The chain is Cytochrome b-245 light chain from Mus musculus (Mouse).